Consider the following 250-residue polypeptide: 5-oxoprolinase subunit A (250 aa).

The protein belongs to the LamB/PxpA family. In terms of assembly, forms a complex composed of PxpA, PxpB and PxpC.

The catalysed reaction is 5-oxo-L-proline + ATP + 2 H2O = L-glutamate + ADP + phosphate + H(+). Functionally, catalyzes the cleavage of 5-oxoproline to form L-glutamate coupled to the hydrolysis of ATP to ADP and inorganic phosphate. This is 5-oxoprolinase subunit A from Staphylococcus aureus (strain Mu3 / ATCC 700698).